Consider the following 207-residue polypeptide: Ribonuclease HII (207 aa).

An RNase H type-2 domain is found at 20 to 207 (QLFAGVDEVG…KPVKRVLGIE (188 aa)). The a divalent metal cation site is built by Asp-26, Glu-27, and Asp-118.

This sequence belongs to the RNase HII family. Requires Mn(2+) as cofactor. It depends on Mg(2+) as a cofactor.

It is found in the cytoplasm. The catalysed reaction is Endonucleolytic cleavage to 5'-phosphomonoester.. Functionally, endonuclease that specifically degrades the RNA of RNA-DNA hybrids. This chain is Ribonuclease HII, found in Aliivibrio fischeri (strain MJ11) (Vibrio fischeri).